A 169-amino-acid chain; its full sequence is Protein-export protein SecB (169 aa).

The protein belongs to the SecB family. In terms of assembly, homotetramer, a dimer of dimers. One homotetramer interacts with 1 SecA dimer.

It is found in the cytoplasm. One of the proteins required for the normal export of preproteins out of the cell cytoplasm. It is a molecular chaperone that binds to a subset of precursor proteins, maintaining them in a translocation-competent state. It also specifically binds to its receptor SecA. The chain is Protein-export protein SecB from Haemophilus influenzae (strain PittEE).